We begin with the raw amino-acid sequence, 206 residues long: Small ribosomal subunit protein uS3 (206 aa).

Positions 39–107 (IRSYINESFK…SVEVNVVGIK (69 aa)) constitute a KH type-2 domain.

It belongs to the universal ribosomal protein uS3 family. As to quaternary structure, part of the 30S ribosomal subunit. Forms a tight complex with proteins S10 and S14.

Its function is as follows. Binds the lower part of the 30S subunit head. Binds mRNA in the 70S ribosome, positioning it for translation. The sequence is that of Small ribosomal subunit protein uS3 from Wolbachia sp. subsp. Brugia malayi (strain TRS).